Reading from the N-terminus, the 58-residue chain is MIKLISITQIKSSIGRLPKHKATLSGLGLRYIGHTVLRKNTPSVRGMIKLLSFMLRIN.

This sequence belongs to the universal ribosomal protein uL30 family. In terms of assembly, part of the 50S ribosomal subunit.

The protein is Large ribosomal subunit protein uL30 of Buchnera aphidicola subsp. Baizongia pistaciae (strain Bp).